We begin with the raw amino-acid sequence, 202 residues long: GTP cyclohydrolase 1 (202 aa).

Zn(2+) contacts are provided by Cys90, His93, and Cys163.

It belongs to the GTP cyclohydrolase I family. As to quaternary structure, toroid-shaped homodecamer, composed of two pentamers of five dimers.

The enzyme catalyses GTP + H2O = 7,8-dihydroneopterin 3'-triphosphate + formate + H(+). It functions in the pathway cofactor biosynthesis; 7,8-dihydroneopterin triphosphate biosynthesis; 7,8-dihydroneopterin triphosphate from GTP: step 1/1. The protein is GTP cyclohydrolase 1 of Mycolicibacterium vanbaalenii (strain DSM 7251 / JCM 13017 / BCRC 16820 / KCTC 9966 / NRRL B-24157 / PYR-1) (Mycobacterium vanbaalenii).